The following is a 417-amino-acid chain: NADH-quinone oxidoreductase subunit D (417 aa).

The protein belongs to the complex I 49 kDa subunit family. As to quaternary structure, NDH-1 is composed of 14 different subunits. Subunits NuoB, C, D, E, F, and G constitute the peripheral sector of the complex.

The protein localises to the cell inner membrane. The catalysed reaction is a quinone + NADH + 5 H(+)(in) = a quinol + NAD(+) + 4 H(+)(out). In terms of biological role, NDH-1 shuttles electrons from NADH, via FMN and iron-sulfur (Fe-S) centers, to quinones in the respiratory chain. The immediate electron acceptor for the enzyme in this species is believed to be ubiquinone. Couples the redox reaction to proton translocation (for every two electrons transferred, four hydrogen ions are translocated across the cytoplasmic membrane), and thus conserves the redox energy in a proton gradient. In Francisella tularensis subsp. tularensis (strain FSC 198), this protein is NADH-quinone oxidoreductase subunit D.